Here is a 38-residue protein sequence, read N- to C-terminus: Large ribosomal subunit protein bL36 (38 aa).

This sequence belongs to the bacterial ribosomal protein bL36 family.

The protein is Large ribosomal subunit protein bL36 of Streptococcus agalactiae serotype III (strain NEM316).